Consider the following 421-residue polypeptide: Signal recognition particle receptor FtsY (421 aa).

Residues 228–235 (GINGAGKT), 309–313 (DTAGR), and 373–376 (TKLD) each bind GTP.

This sequence belongs to the GTP-binding SRP family. FtsY subfamily. In terms of assembly, part of the signal recognition particle protein translocation system, which is composed of SRP and FtsY. SRP is a ribonucleoprotein composed of Ffh and a 4.5S RNA molecule.

It is found in the cell inner membrane. The protein localises to the cytoplasm. The catalysed reaction is GTP + H2O = GDP + phosphate + H(+). Functionally, involved in targeting and insertion of nascent membrane proteins into the cytoplasmic membrane. Acts as a receptor for the complex formed by the signal recognition particle (SRP) and the ribosome-nascent chain (RNC). Interaction with SRP-RNC leads to the transfer of the RNC complex to the Sec translocase for insertion into the membrane, the hydrolysis of GTP by both Ffh and FtsY, and the dissociation of the SRP-FtsY complex into the individual components. The polypeptide is Signal recognition particle receptor FtsY (Neisseria meningitidis serogroup B (strain ATCC BAA-335 / MC58)).